Reading from the N-terminus, the 347-residue chain is MRIEEDLKLGFKDVLIRPKRSTLKSRSDVELERQFTFKHSGQSWSGVPIIAANMDTVGTFSMASALASFDILTAVHKHFSVEEWQAFINNSSADVLKHVMVSTGTSDADFEKTKQILDLNPALNFVCIDVANGYSEHFVQFVAKAREAWPTKTICAGNVVTGEMCEELILSGADIVKVGIGPGSVCTTRVKTGVGYPQLSAVIECADAAHGLGGMIVSDGGCTTPGDVAKAFGGGADFVMLGGMLAGHEESGGRIVEENGEKFMLFYGMSSESAMKRHVGGVAEYRAAEGKTVKLPLRGPVENTARDILGGLRSACTYVGASRLKELTKRTTFIRVLEQENRIFNNL.

108-131 contributes to the NADP(+) binding site; that stretch reads ADFEKTKQILDLNPALNFVCIDVA. Residues G181 and G183 each contribute to the K(+) site. Residue C186 is the Thioimidate intermediate of the active site. Position 216-239 (216-239) interacts with NADP(+); sequence IVSDGGCTTPGDVAKAFGGGADFV.

The protein belongs to the IMPDH/GMPR family. GuaC type 1 subfamily. In terms of assembly, homotetramer.

It catalyses the reaction IMP + NH4(+) + NADP(+) = GMP + NADPH + 2 H(+). Its function is as follows. Catalyzes the irreversible NADPH-dependent deamination of GMP to IMP. It functions in the conversion of nucleobase, nucleoside and nucleotide derivatives of G to A nucleotides, and in maintaining the intracellular balance of A and G nucleotides. This is GMP reductase from Shigella flexneri serotype 5b (strain 8401).